The primary structure comprises 140 residues: Ribosomal RNA large subunit methyltransferase H (140 aa).

S-adenosyl-L-methionine contacts are provided by residues Leu58, Gly90, and 108–113 (LSLLTF).

The protein belongs to the RNA methyltransferase RlmH family. As to quaternary structure, homodimer.

It is found in the cytoplasm. The catalysed reaction is pseudouridine(1915) in 23S rRNA + S-adenosyl-L-methionine = N(3)-methylpseudouridine(1915) in 23S rRNA + S-adenosyl-L-homocysteine + H(+). Its function is as follows. Specifically methylates the pseudouridine at position 1915 (m3Psi1915) in 23S rRNA. This is Ribosomal RNA large subunit methyltransferase H from Protochlamydia amoebophila (strain UWE25).